The following is a 459-amino-acid chain: Exodeoxyribonuclease 7 large subunit (459 aa).

This sequence belongs to the XseA family. In terms of assembly, heterooligomer composed of large and small subunits.

Its subcellular location is the cytoplasm. The catalysed reaction is Exonucleolytic cleavage in either 5'- to 3'- or 3'- to 5'-direction to yield nucleoside 5'-phosphates.. In terms of biological role, bidirectionally degrades single-stranded DNA into large acid-insoluble oligonucleotides, which are then degraded further into small acid-soluble oligonucleotides. The chain is Exodeoxyribonuclease 7 large subunit from Pseudomonas putida (strain ATCC 47054 / DSM 6125 / CFBP 8728 / NCIMB 11950 / KT2440).